A 443-amino-acid polypeptide reads, in one-letter code: Xaa-Pro dipeptidase (443 aa).

Mn(2+) is bound by residues Asp246, Asp257, His339, Glu384, and Glu423.

The protein belongs to the peptidase M24B family. Bacterial-type prolidase subfamily. Mn(2+) is required as a cofactor.

It carries out the reaction Xaa-L-Pro dipeptide + H2O = an L-alpha-amino acid + L-proline. Its function is as follows. Splits dipeptides with a prolyl residue in the C-terminal position. The protein is Xaa-Pro dipeptidase of Shigella flexneri.